The sequence spans 185 residues: Elongation factor P (185 aa).

Belongs to the elongation factor P family.

It is found in the cytoplasm. It participates in protein biosynthesis; polypeptide chain elongation. Functionally, involved in peptide bond synthesis. Stimulates efficient translation and peptide-bond synthesis on native or reconstituted 70S ribosomes in vitro. Probably functions indirectly by altering the affinity of the ribosome for aminoacyl-tRNA, thus increasing their reactivity as acceptors for peptidyl transferase. The sequence is that of Elongation factor P from Cyanothece sp. (strain PCC 7425 / ATCC 29141).